A 154-amino-acid polypeptide reads, in one-letter code: Ribosome maturation factor RimP (154 aa).

The protein belongs to the RimP family.

It is found in the cytoplasm. Functionally, required for maturation of 30S ribosomal subunits. The protein is Ribosome maturation factor RimP of Heliobacterium modesticaldum (strain ATCC 51547 / Ice1).